A 122-amino-acid polypeptide reads, in one-letter code: Putative 2'-deoxynucleoside 5'-phosphate N-hydrolase 1 (122 aa).

Residues 4 to 10, Y19, H37, E83, and 105 to 107 each bind substrate; these read FLSGSIR and SAM.

This sequence belongs to the 2'-deoxynucleoside 5'-phosphate N-hydrolase 1 family. In terms of assembly, monomer and homodimer.

The enzyme catalyses a pyrimidine 2'-deoxyribonucleoside 5'-phosphate + H2O = a pyrimidine nucleobase + 2-deoxy-D-ribose 5-phosphate. It carries out the reaction a purine 2'-deoxyribonucleoside 5'-phosphate + H2O = a purine nucleobase + 2-deoxy-D-ribose 5-phosphate. Catalyzes the cleavage of the N-glycosidic bond of deoxyribonucleoside 5'-monophosphates to yield deoxyribose 5-phosphate and a purine or pyrimidine base. The sequence is that of Putative 2'-deoxynucleoside 5'-phosphate N-hydrolase 1 from Methanococcoides burtonii (strain DSM 6242 / NBRC 107633 / OCM 468 / ACE-M).